A 134-amino-acid polypeptide reads, in one-letter code: Ribosome-binding factor A (134 aa).

It belongs to the RbfA family. In terms of assembly, monomer. Binds 30S ribosomal subunits, but not 50S ribosomal subunits or 70S ribosomes.

The protein resides in the cytoplasm. Functionally, one of several proteins that assist in the late maturation steps of the functional core of the 30S ribosomal subunit. Associates with free 30S ribosomal subunits (but not with 30S subunits that are part of 70S ribosomes or polysomes). Required for efficient processing of 16S rRNA. May interact with the 5'-terminal helix region of 16S rRNA. This chain is Ribosome-binding factor A, found in Cyanothece sp. (strain PCC 7425 / ATCC 29141).